The chain runs to 292 residues: Undecaprenyl-diphosphatase (292 aa).

Transmembrane regions (helical) follow at residues 87–107 (MGWY…LFEE), 113–133 (FRDL…LGMV), 190–210 (AFLL…KDIG), 219–239 (ATIV…AWFM), and 250–270 (FVYY…FGVL).

It belongs to the UppP family.

The protein localises to the cell membrane. The enzyme catalyses di-trans,octa-cis-undecaprenyl diphosphate + H2O = di-trans,octa-cis-undecaprenyl phosphate + phosphate + H(+). Its function is as follows. Catalyzes the dephosphorylation of undecaprenyl diphosphate (UPP). Confers resistance to bacitracin. This chain is Undecaprenyl-diphosphatase, found in Thermobifida fusca (strain YX).